The sequence spans 640 residues: MREEDLDWEEIGLRVGLEIHRQLDTSRKLFCRCTPELVEEVPKEPKVRRKLRPVQSEMGEFDPAALEEFKRDRTFYYLADGSFSCLVELDEEPPHEPCSEALDVAIKVTLLLGGSVVDEVHVMRKMVIDGSNTTGFQRTMLVGFGGEVPTSEGPVRISTVCLEEDAARKVKGRDQDLEVDYCLDRLGIPLIEVSTEPDIRTPEQAREAAERIGEAIKAVGGVKSGIGTVRQDVNVSIEGGAVQEIKGVQDLNLIPKVVKYEALRQANLLRIRDELRERGVSETDLIDCEPMDVTDVFEDTDSEVIRRELERGGVVYALLLPGFEGILGWELCPGRRFGTELADYARRRGVSGLFHSDELPKYGISEEEVEAVRQRLGAEDGDGFVLIAGPEDRVKSAMEAVKDRAIMALKGVPAETRRARKDGTTEYMRPRPGAARMYPETDIPPVVIDEDRVKELAEELPEKPWERKERLAEEYGLGEELVEQMFEHGVVDEFEEIVEETGVEPKVAAATLVNTIPRLEKDGYPVDNLTIDHVKEVLRLYAEGAIAKSGIEELLGALAADPDSDPEELAEELGIVMASEEEIEEVVEEAIRRYEDKIRERGMAVMGKIMGEVMEVLRGRADGKRVSELVRERIREISGE.

This sequence belongs to the GatB/GatE family. GatE subfamily. Heterodimer of GatD and GatE.

The catalysed reaction is L-glutamyl-tRNA(Gln) + L-glutamine + ATP + H2O = L-glutaminyl-tRNA(Gln) + L-glutamate + ADP + phosphate + H(+). Functionally, allows the formation of correctly charged Gln-tRNA(Gln) through the transamidation of misacylated Glu-tRNA(Gln) in organisms which lack glutaminyl-tRNA synthetase. The reaction takes place in the presence of glutamine and ATP through an activated gamma-phospho-Glu-tRNA(Gln). The GatDE system is specific for glutamate and does not act on aspartate. This chain is Glutamyl-tRNA(Gln) amidotransferase subunit E, found in Methanopyrus kandleri (strain AV19 / DSM 6324 / JCM 9639 / NBRC 100938).